The sequence spans 329 residues: GMP reductase (329 aa).

Cysteine 178 functions as the Thioimidate intermediate in the catalytic mechanism. 207–230 (VIADGGIRTHGDIAKSIRMGATMV) provides a ligand contact to NADP(+).

Belongs to the IMPDH/GMPR family. GuaC type 2 subfamily.

It carries out the reaction IMP + NH4(+) + NADP(+) = GMP + NADPH + 2 H(+). In terms of biological role, catalyzes the irreversible NADPH-dependent deamination of GMP to IMP. It functions in the conversion of nucleobase, nucleoside and nucleotide derivatives of G to A nucleotides, and in maintaining the intracellular balance of A and G nucleotides. The sequence is that of GMP reductase from Lactococcus lactis subsp. cremoris (strain SK11).